Here is a 459-residue protein sequence, read N- to C-terminus: Exodeoxyribonuclease 7 large subunit (459 aa).

The protein belongs to the XseA family. As to quaternary structure, heterooligomer composed of large and small subunits.

The protein localises to the cytoplasm. It catalyses the reaction Exonucleolytic cleavage in either 5'- to 3'- or 3'- to 5'-direction to yield nucleoside 5'-phosphates.. Bidirectionally degrades single-stranded DNA into large acid-insoluble oligonucleotides, which are then degraded further into small acid-soluble oligonucleotides. This is Exodeoxyribonuclease 7 large subunit from Yersinia pestis bv. Antiqua (strain Antiqua).